We begin with the raw amino-acid sequence, 118 residues long: Large ribosomal subunit protein bL20 (118 aa).

The protein belongs to the bacterial ribosomal protein bL20 family.

In terms of biological role, binds directly to 23S ribosomal RNA and is necessary for the in vitro assembly process of the 50S ribosomal subunit. It is not involved in the protein synthesizing functions of that subunit. The protein is Large ribosomal subunit protein bL20 of Azotobacter vinelandii.